The chain runs to 967 residues: Dolichyl-phosphooligosaccharide-protein glycotransferase 1 (967 aa).

The Cytoplasmic segment spans residues 1-21 (MVKTQIKEKKKDEKVTIPLPG). A helical transmembrane segment spans residues 22–42 (KIKTVLAFLVVLAFAAYGFYI). At 43–112 (RHLTAGKYFS…ISIFGYNELE (70 aa)) the chain is on the extracellular side. The DXD motif 1 motif lies at 53-55 (DPD). Asp-55 is a Mn(2+) binding site. A helical membrane pass occupies residues 113 to 133 (AFLLWPPFVGFLSVIGVYLLG). The Cytoplasmic segment spans residues 134 to 135 (RK). The chain crosses the membrane as a helical span at residues 136–156 (VLNEWAGMWGAIILSVLTANF). Residues 157-165 (SRTFSGNAR) lie on the Extracellular side of the membrane. Residues Arg-165 and Asp-167 each coordinate Mn(2+). A DXD motif 2 motif is present at residues 165-167 (RGD). A helical transmembrane segment spans residues 166-186 (GDGPFMMLFTFSAVLMLYYLT). The Cytoplasmic segment spans residues 187–193 (EENKNKK). A helical membrane pass occupies residues 194–214 (IIWGTLFVLLAGISTAAWNGS). Pro-215 is a topological domain (extracellular). The helical transmembrane segment at 216–236 (FGLMVLLGFASFQTIILFIFG) threads the bilayer. The Cytoplasmic portion of the chain corresponds to 237–247 (KINELREFIKE). Residues 248 to 268 (YYPAYLGILAISYLLTIPGIG) traverse the membrane as a helical segment. Position 269 (Lys-269) is a topological domain, extracellular. A helical membrane pass occupies residues 270–290 (IGGFVRFAFEVFLGLVFLAIV). At 291–306 (MLYGGKYLNYSDKKHR) the chain is on the cytoplasmic side. A helical membrane pass occupies residues 307–327 (FAVVAVIVIAGFAGAYIYVGP). Over 328–360 (KLFTLMGGAYQSTQVYETVQELAKTDWGDVKVY) the chain is Extracellular. Positions 345-348 (TVQE) match the TIXE motif motif. The helical transmembrane segment at 361-381 (YGVEKPNGIVFFLGLVGAMIV) threads the bilayer. Topologically, residues 382-396 (TARYLYKLFKDGRRP) are cytoplasmic. Residues 397-417 (HEELFAITFYVMSIYLLWTAA) traverse the membrane as a helical segment. Residue Arg-418 is a topological domain, extracellular. Position 418 (Arg-418) interacts with a glycophospholipid. A helical transmembrane segment spans residues 419-439 (FLFLASYAIALMSGVFAGYVL). The Cytoplasmic portion of the chain corresponds to 440-453 (ETVEKMKESIPIKA). Residues 454–474 (ALGGVIAIMLLLIPLTHGPLL) form a helical membrane-spanning segment. Residues 475 to 967 (AQSAKSMRTT…LEVSASAPHH (493 aa)) lie on the Extracellular side of the membrane. The tract at residues 511–513 (WWD) is interacts with target acceptor peptide in protein substrate. A WWDYG motif motif is present at residues 511–515 (WWDYG). Residue Tyr-516 participates in a glycophospholipid binding. The DK motif signature appears at 571 to 578 (DWAKFNAI).

The protein belongs to the STT3 family. Mn(2+) serves as cofactor. It depends on Mg(2+) as a cofactor.

It is found in the cell membrane. It catalyses the reaction an archaeal dolichyl phosphooligosaccharide + [protein]-L-asparagine = an archaeal dolichyl phosphate + a glycoprotein with the oligosaccharide chain attached by N-beta-D-glycosyl linkage to a protein L-asparagine.. Its pathway is protein modification; protein glycosylation. Functionally, oligosaccharyl transferase (OST) that catalyzes the initial transfer of a defined glycan (ManNAcXyl(2)GlcAMan(2)GalNAc in P.furiosus) from the lipid carrier dolichol-monophosphate to an asparagine residue within an Asn-X-Ser/Thr consensus motif in nascent polypeptide chains, the first step in protein N-glycosylation. The protein is Dolichyl-phosphooligosaccharide-protein glycotransferase 1 (aglB1) of Pyrococcus furiosus (strain ATCC 43587 / DSM 3638 / JCM 8422 / Vc1).